We begin with the raw amino-acid sequence, 408 residues long: LL-diaminopimelate aminotransferase (408 aa).

Positions 15 and 42 each coordinate substrate. Residues Y72, 108-109 (SK), Y132, N187, Y218, and 246-248 (SFS) each bind pyridoxal 5'-phosphate. Residues K109, Y132, and N187 each contribute to the substrate site. Position 249 is an N6-(pyridoxal phosphate)lysine (K249). Residues R257 and N291 each contribute to the pyridoxal 5'-phosphate site. Residues N291 and R387 each contribute to the substrate site.

The protein belongs to the class-I pyridoxal-phosphate-dependent aminotransferase family. LL-diaminopimelate aminotransferase subfamily. Homodimer. Pyridoxal 5'-phosphate serves as cofactor.

It carries out the reaction (2S,6S)-2,6-diaminopimelate + 2-oxoglutarate = (S)-2,3,4,5-tetrahydrodipicolinate + L-glutamate + H2O + H(+). Its pathway is amino-acid biosynthesis; L-lysine biosynthesis via DAP pathway; LL-2,6-diaminopimelate from (S)-tetrahydrodipicolinate (aminotransferase route): step 1/1. Functionally, involved in the synthesis of meso-diaminopimelate (m-DAP or DL-DAP), required for both lysine and peptidoglycan biosynthesis. Catalyzes the direct conversion of tetrahydrodipicolinate to LL-diaminopimelate. The protein is LL-diaminopimelate aminotransferase of Prochlorococcus marinus (strain NATL1A).